The following is a 243-amino-acid chain: Tegument protein UL14 homolog (243 aa).

It belongs to the alphaherpesvirinae HHV-1 UL14 protein family. Post-translationally, phosphorylated.

It localises to the virion tegument. Its subcellular location is the host cytoplasm. It is found in the host nucleus. Functionally, contributes to the nuclear transport of the viral transcriptional activator VP16 homolog during the early phase of infection. Therefore, participates indirectly in the regulation of the immediate-early gene expression. Additionally, seems to be important for efficient nuclear targeting of capsids. The protein is Tegument protein UL14 homolog (MDV026) of Gallid herpesvirus 2 (strain Chicken/Md5/ATCC VR-987) (GaHV-2).